We begin with the raw amino-acid sequence, 392 residues long: Probable Ni/Fe-hydrogenase 2 b-type cytochrome subunit (392 aa).

Over 1–11 (MSHDPQPLGGK) the chain is Periplasmic. A helical membrane pass occupies residues 12-32 (IISKPVMIFGPLIVICMLLIV). Residues 33-34 (KR) lie on the Cytoplasmic side of the membrane. A helical transmembrane segment spans residues 35-55 (LVFGLGSVSDLNGGFPWGVWI). Residues 56–58 (AFD) lie on the Periplasmic side of the membrane. The helical transmembrane segment at 59–79 (LLIGTGFACGGWALAWAVYVF) threads the bilayer. The Cytoplasmic segment spans residues 80–90 (NRGQYHPLVRP). A helical transmembrane segment spans residues 91–111 (ALLASLFGYSLGGLSITIDVG). At 112–133 (RYWNLPYFYIPGHFNVNSVLFE) the chain is on the periplasmic side. Residues 134 to 154 (TAVCMTIYIGVMALEFAPALF) form a helical membrane-spanning segment. Residues 155–168 (ERLGWKVSLQRLNK) lie on the Cytoplasmic side of the membrane. A helical transmembrane segment spans residues 169 to 189 (VMFFIIALGALLPTMHQSSMG). Topologically, residues 190–207 (SLMISAGYKVHPLWQSYE) are periplasmic. A helical membrane pass occupies residues 208–228 (MLPLFSLLTAFIMGFSIVIFE). The Cytoplasmic segment spans residues 229–249 (GSLVQAGLRGNGPDEKSLFVK). The helical transmembrane segment at 250–270 (LTNTISVLLAIFIVLRFGELI) threads the bilayer. At 271–281 (YRDKLSLAFAG) the chain is on the periplasmic side. The helical transmembrane segment at 282 to 302 (DFYSVMFWIEVLLMLFPLVVL) threads the bilayer. The Cytoplasmic segment spans residues 303–333 (RVAKLRNDSRMLFLSALSALLGCATWRLTYS). A helical membrane pass occupies residues 334 to 354 (LVAFNPGGGYAYFPTWEELLI). Position 355 (S355) is a topological domain, periplasmic. Residues 356–376 (IGFVAIEICAYIVLIRLLPIL) form a helical membrane-spanning segment. Topologically, residues 377–392 (PPLKQNDHNRHEASKA) are cytoplasmic.

This sequence belongs to the NrfD family.

The protein localises to the cell inner membrane. Probable b-type cytochrome. This chain is Probable Ni/Fe-hydrogenase 2 b-type cytochrome subunit (hybB), found in Escherichia coli (strain K12).